Consider the following 193-residue polypeptide: UPF0215 protein PH0071 (193 aa).

This sequence belongs to the UPF0215 family.

In Pyrococcus horikoshii (strain ATCC 700860 / DSM 12428 / JCM 9974 / NBRC 100139 / OT-3), this protein is UPF0215 protein PH0071.